The sequence spans 177 residues: 2''-aminoglycoside nucleotidyltransferase (177 aa).

Mg(2+) is bound by residues Asp44, Asp46, and Asp86. Asp86 functions as the Proton acceptor in the catalytic mechanism.

It depends on Mg(2+) as a cofactor.

It carries out the reaction nucleoside triphosphate + gentamicin = diphosphate + 2''-nucleotidylgentamicin.. In terms of biological role, mediates bacterial resistance to kanamycin, gentamicin, dibekacin, sisomicin, neomycin and tobramycin by adenylating the 2''-hydroxyl group of these antibiotics. The polypeptide is 2''-aminoglycoside nucleotidyltransferase (aadB) (Klebsiella pneumoniae).